The following is a 106-amino-acid chain: ATP-dependent Clp protease adapter protein ClpS (106 aa).

It belongs to the ClpS family. Binds to the N-terminal domain of the chaperone ClpA.

Involved in the modulation of the specificity of the ClpAP-mediated ATP-dependent protein degradation. This chain is ATP-dependent Clp protease adapter protein ClpS, found in Sodalis glossinidius (strain morsitans).